Reading from the N-terminus, the 508-residue chain is ATP synthase subunit alpha, chloroplastic (508 aa).

170–177 (GDRQTGKT) lines the ATP pocket.

Belongs to the ATPase alpha/beta chains family. As to quaternary structure, F-type ATPases have 2 components, CF(1) - the catalytic core - and CF(0) - the membrane proton channel. CF(1) has five subunits: alpha(3), beta(3), gamma(1), delta(1), epsilon(1). CF(0) has four main subunits: a, b, b' and c.

The protein resides in the plastid. It is found in the chloroplast thylakoid membrane. The catalysed reaction is ATP + H2O + 4 H(+)(in) = ADP + phosphate + 5 H(+)(out). In terms of biological role, produces ATP from ADP in the presence of a proton gradient across the membrane. The alpha chain is a regulatory subunit. The polypeptide is ATP synthase subunit alpha, chloroplastic (Helianthus annuus (Common sunflower)).